Reading from the N-terminus, the 87-residue chain is Long neurotoxin LlLong (87 aa).

Positions 1–20 (KTLLLTLVVVTIICLDFGYT) are cleaved as a signal peptide. 5 disulfide bridges follow: Cys-23/Cys-41, Cys-34/Cys-62, Cys-47/Cys-51, Cys-66/Cys-77, and Cys-78/Cys-83.

The protein belongs to the three-finger toxin family. Long-chain subfamily. Type II alpha-neurotoxin sub-subfamily. Expressed by the venom gland.

It is found in the secreted. Functionally, binds with high affinity to muscular (alpha-1/CHRNA1) and neuronal (alpha-7/CHRNA7) nicotinic acetylcholine receptor (nAChR) and inhibits acetylcholine from binding to the receptor, thereby impairing neuromuscular and neuronal transmission. The polypeptide is Long neurotoxin LlLong (Laticauda laticaudata (Blue-ringed sea krait)).